The following is a 334-amino-acid chain: S-adenosylmethionine:tRNA ribosyltransferase-isomerase (334 aa).

Belongs to the QueA family. Monomer.

It is found in the cytoplasm. The enzyme catalyses 7-aminomethyl-7-carbaguanosine(34) in tRNA + S-adenosyl-L-methionine = epoxyqueuosine(34) in tRNA + adenine + L-methionine + 2 H(+). The protein operates within tRNA modification; tRNA-queuosine biosynthesis. Functionally, transfers and isomerizes the ribose moiety from AdoMet to the 7-aminomethyl group of 7-deazaguanine (preQ1-tRNA) to give epoxyqueuosine (oQ-tRNA). The chain is S-adenosylmethionine:tRNA ribosyltransferase-isomerase from Thermosipho melanesiensis (strain DSM 12029 / CIP 104789 / BI429).